Here is a 495-residue protein sequence, read N- to C-terminus: Lanosterol 14-alpha demethylase erg11 (495 aa).

The helical transmembrane segment at 2 to 22 (AFSLVSILLSIALAWYVGYII) threads the bilayer. Cysteine 442 serves as a coordination point for heme.

It belongs to the cytochrome P450 family. In terms of assembly, interacts with dap1. Heme is required as a cofactor.

It localises to the endoplasmic reticulum. Its subcellular location is the membrane. It carries out the reaction a 14alpha-methyl steroid + 3 reduced [NADPH--hemoprotein reductase] + 3 O2 = a Delta(14) steroid + formate + 3 oxidized [NADPH--hemoprotein reductase] + 4 H2O + 4 H(+). The enzyme catalyses a 14alpha-methyl steroid + reduced [NADPH--hemoprotein reductase] + O2 = a 14alpha-hydroxymethyl steroid + oxidized [NADPH--hemoprotein reductase] + H2O + H(+). It catalyses the reaction a 14alpha-hydroxymethyl steroid + reduced [NADPH--hemoprotein reductase] + O2 = a 14alpha-formyl steroid + oxidized [NADPH--hemoprotein reductase] + 2 H2O + H(+). The catalysed reaction is a 14alpha-formyl steroid + reduced [NADPH--hemoprotein reductase] + O2 = a Delta(14) steroid + formate + oxidized [NADPH--hemoprotein reductase] + H2O + 2 H(+). It carries out the reaction lanosterol + 3 reduced [NADPH--hemoprotein reductase] + 3 O2 = 4,4-dimethyl-5alpha-cholesta-8,14,24-trien-3beta-ol + formate + 3 oxidized [NADPH--hemoprotein reductase] + 4 H2O + 4 H(+). The enzyme catalyses lanosterol + reduced [NADPH--hemoprotein reductase] + O2 = 32-hydroxylanosterol + oxidized [NADPH--hemoprotein reductase] + H2O + H(+). It catalyses the reaction 32-hydroxylanosterol + reduced [NADPH--hemoprotein reductase] + O2 = 32-oxolanosterol + oxidized [NADPH--hemoprotein reductase] + 2 H2O + H(+). The catalysed reaction is 32-oxolanosterol + reduced [NADPH--hemoprotein reductase] + O2 = 4,4-dimethyl-5alpha-cholesta-8,14,24-trien-3beta-ol + formate + oxidized [NADPH--hemoprotein reductase] + H2O + 2 H(+). It carries out the reaction eburicol + 3 reduced [NADPH--hemoprotein reductase] + 3 O2 = 14-demethyleburicol + formate + 3 oxidized [NADPH--hemoprotein reductase] + 4 H2O + 4 H(+). The enzyme catalyses eburicol + reduced [NADPH--hemoprotein reductase] + O2 = 32-hydroxyeburicol + oxidized [NADPH--hemoprotein reductase] + H2O + H(+). It catalyses the reaction 32-hydroxyeburicol + reduced [NADPH--hemoprotein reductase] + O2 = 32-oxoeburicol + oxidized [NADPH--hemoprotein reductase] + 2 H2O + H(+). The catalysed reaction is 32-oxoeburicol + reduced [NADPH--hemoprotein reductase] + O2 = 14-demethyleburicol + formate + oxidized [NADPH--hemoprotein reductase] + H2O + 2 H(+). It functions in the pathway steroid biosynthesis; zymosterol biosynthesis; zymosterol from lanosterol: step 1/6. The protein operates within steroid metabolism; ergosterol biosynthesis. In terms of biological role, sterol 14alpha-demethylase that plays a critical role in the third module of ergosterol biosynthesis pathway, being ergosterol the major sterol component in fungal membranes that participates in a variety of functions. The third module or late pathway involves the ergosterol synthesis itself through consecutive reactions that mainly occur in the endoplasmic reticulum (ER) membrane. In filamentous fungi, during the initial step of this module, lanosterol (lanosta-8,24-dien-3beta-ol) can be metabolized to eburicol. Sterol 14alpha-demethylase catalyzes the three-step oxidative removal of the 14alpha-methyl group (C-32) of both these sterols in the form of formate, and converts eburicol and lanosterol to 14-demethyleburicol (4,4,24-trimethylergosta-8,14,24(28)-trienol) and 4,4-dimethyl-5alpha-cholesta-8,14,24-trien-3beta-ol, respectively, which are further metabolized by other enzymes in the pathway to ergosterol. Can also use substrates not intrinsic to fungi, such as 24,25-dihydrolanosterol (DHL), producing 4,4-dimethyl-8,14-cholestadien-3-beta-ol, but at lower rates than the endogenous substrates. The polypeptide is Lanosterol 14-alpha demethylase erg11 (Schizosaccharomyces pombe (strain 972 / ATCC 24843) (Fission yeast)).